A 400-amino-acid chain; its full sequence is Acetylornithine aminotransferase (400 aa).

Residues 102 to 103 (GA) and F135 each bind pyridoxal 5'-phosphate. A N(2)-acetyl-L-ornithine-binding site is contributed by R138. Residue 220-223 (DEVQ) participates in pyridoxal 5'-phosphate binding. At K249 the chain carries N6-(pyridoxal phosphate)lysine. S276 contributes to the N(2)-acetyl-L-ornithine binding site. A pyridoxal 5'-phosphate-binding site is contributed by T277.

It belongs to the class-III pyridoxal-phosphate-dependent aminotransferase family. ArgD subfamily. Homodimer. The cofactor is pyridoxal 5'-phosphate.

The protein resides in the cytoplasm. It catalyses the reaction N(2)-acetyl-L-ornithine + 2-oxoglutarate = N-acetyl-L-glutamate 5-semialdehyde + L-glutamate. Its pathway is amino-acid biosynthesis; L-arginine biosynthesis; N(2)-acetyl-L-ornithine from L-glutamate: step 4/4. The chain is Acetylornithine aminotransferase from Gloeobacter violaceus (strain ATCC 29082 / PCC 7421).